The following is a 140-amino-acid chain: ATP synthase epsilon chain (140 aa).

Belongs to the ATPase epsilon chain family. As to quaternary structure, F-type ATPases have 2 components, CF(1) - the catalytic core - and CF(0) - the membrane proton channel. CF(1) has five subunits: alpha(3), beta(3), gamma(1), delta(1), epsilon(1). CF(0) has three main subunits: a, b and c.

The protein resides in the cell inner membrane. In terms of biological role, produces ATP from ADP in the presence of a proton gradient across the membrane. The polypeptide is ATP synthase epsilon chain (Neisseria meningitidis serogroup A / serotype 4A (strain DSM 15465 / Z2491)).